The chain runs to 285 residues: Bifunctional protein FolD (285 aa).

NADP(+)-binding positions include 166 to 168 and Ile-232; that span reads GAS.

This sequence belongs to the tetrahydrofolate dehydrogenase/cyclohydrolase family. In terms of assembly, homodimer.

It catalyses the reaction (6R)-5,10-methylene-5,6,7,8-tetrahydrofolate + NADP(+) = (6R)-5,10-methenyltetrahydrofolate + NADPH. The enzyme catalyses (6R)-5,10-methenyltetrahydrofolate + H2O = (6R)-10-formyltetrahydrofolate + H(+). The protein operates within one-carbon metabolism; tetrahydrofolate interconversion. Its function is as follows. Catalyzes the oxidation of 5,10-methylenetetrahydrofolate to 5,10-methenyltetrahydrofolate and then the hydrolysis of 5,10-methenyltetrahydrofolate to 10-formyltetrahydrofolate. The polypeptide is Bifunctional protein FolD (Aliivibrio fischeri (strain MJ11) (Vibrio fischeri)).